The sequence spans 333 residues: Adenosine deaminase (333 aa).

His12 and His14 together coordinate Zn(2+). 2 residues coordinate substrate: His14 and Asp16. Pentostatin is bound by residues 14–16, Ser141, and Gly170; that span reads HLD. Gly170 lines the substrate pocket. His197 is a binding site for Zn(2+). Pentostatin is bound by residues Glu200, His221, and Asp278. Catalysis depends on Glu200, which acts as the Proton donor. Asp278 serves as a coordination point for Zn(2+). Asp279 lines the substrate pocket.

It belongs to the metallo-dependent hydrolases superfamily. Adenosine and AMP deaminases family. Adenosine deaminase subfamily. It depends on Zn(2+) as a cofactor.

It catalyses the reaction adenosine + H2O + H(+) = inosine + NH4(+). It carries out the reaction 2'-deoxyadenosine + H2O + H(+) = 2'-deoxyinosine + NH4(+). Functionally, catalyzes the hydrolytic deamination of adenosine and 2-deoxyadenosine. This chain is Adenosine deaminase, found in Salmonella typhimurium (strain LT2 / SGSC1412 / ATCC 700720).